Reading from the N-terminus, the 406-residue chain is Protease ElaD (406 aa).

Histidine 234 is a catalytic residue. The active-site Nucleophile is the cysteine 316.

This sequence belongs to the peptidase C79 family.

Its function is as follows. Protease that can act as an efficient and specific deubiquitinating enzyme in vitro. Does not possess desumoylating and deneddylating activities. The physiological substrate is unknown. In Escherichia coli O139:H28 (strain E24377A / ETEC), this protein is Protease ElaD (elaD).